Reading from the N-terminus, the 188-residue chain is ATP synthase subunit delta (188 aa).

The protein belongs to the ATPase delta chain family. As to quaternary structure, F-type ATPases have 2 components, F(1) - the catalytic core - and F(0) - the membrane proton channel. F(1) has five subunits: alpha(3), beta(3), gamma(1), delta(1), epsilon(1). F(0) has three main subunits: a(1), b(2) and c(10-14). The alpha and beta chains form an alternating ring which encloses part of the gamma chain. F(1) is attached to F(0) by a central stalk formed by the gamma and epsilon chains, while a peripheral stalk is formed by the delta and b chains.

The protein localises to the cell inner membrane. Its function is as follows. F(1)F(0) ATP synthase produces ATP from ADP in the presence of a proton or sodium gradient. F-type ATPases consist of two structural domains, F(1) containing the extramembraneous catalytic core and F(0) containing the membrane proton channel, linked together by a central stalk and a peripheral stalk. During catalysis, ATP synthesis in the catalytic domain of F(1) is coupled via a rotary mechanism of the central stalk subunits to proton translocation. Functionally, this protein is part of the stalk that links CF(0) to CF(1). It either transmits conformational changes from CF(0) to CF(1) or is implicated in proton conduction. The polypeptide is ATP synthase subunit delta (Sinorhizobium medicae (strain WSM419) (Ensifer medicae)).